The chain runs to 59 residues: uncharacterized protein (59 aa).

A helical transmembrane segment spans residues 7–27; sequence LLLLVAIALISAFALTVTGVV.

Its subcellular location is the membrane. This is an uncharacterized protein from Pyrobaculum aerophilum (strain ATCC 51768 / DSM 7523 / JCM 9630 / CIP 104966 / NBRC 100827 / IM2).